The primary structure comprises 1404 residues: Microtubule organization protein AKNA (1404 aa).

Disordered stretches follow at residues 1–304 (MASS…VSPL) and 317–382 (QHKQ…RPLI). S51 bears the Phosphoserine mark. Residues 70–91 (WDPDMQDSEESSGEETEADDAS) are compositionally biased toward acidic residues. The span at 185 to 203 (KSWSSGTVSLRQPSDSLGS) shows a compositional bias: polar residues. S302 is subject to Phosphoserine. Phosphoserine occurs at positions 485 and 520. The tract at residues 494–549 (AEWWPDPAQDPQASEATGWPFPRTDLSPSSSPGVATPGRLPQSQGIATDQPSTGQT) is disordered. Positions 534 to 549 (PQSQGIATDQPSTGQT) are enriched in polar residues. S617 is modified (phosphoserine). Residues 645–659 (MDQTQRETEPCRPDL) are compositionally biased toward basic and acidic residues. The interval 645–708 (MDQTQRETEP…TSPGSSCTLP (64 aa)) is disordered. Composition is skewed to polar residues over residues 660–674 (QDST…QSAH) and 686–707 (DGQT…SCTL). 2 positions are modified to phosphoserine: S750 and S753. The tract at residues 754–787 (LPEALRDEDEDDLEEEEEEQDHQGPLEVDSPATA) is PEST. Disordered stretches follow at residues 755–1038 (PEAL…STAN) and 1085–1185 (HSTQ…RERV). The span at 759 to 773 (RDEDEDDLEEEEEEQ) shows a compositional bias: acidic residues. The segment covering 803 to 813 (TQAEESHRDAT) has biased composition (basic and acidic residues). Residues S831 and S860 each carry the phosphoserine modification. The segment at 885-906 (HTEEPWMVSPETDSGFVGSETS) is PEST. Composition is skewed to polar residues over residues 903–914 (SETSIVSPFTQT), 921–933 (HVST…QHLT), and 963–974 (SRTQQHFSSLSS). S971 bears the Phosphoserine mark. Over residues 1015–1029 (TSPDSAPAPTAASTP) the composition is skewed to low complexity. Residues 1085–1098 (HSTQTQEKLGSSPS) show a composition bias toward polar residues. The a.T hook DNA-binding region spans 1088-1096 (QTQEKLGSS). Phosphoserine occurs at positions 1144 and 1145. Over residues 1155–1167 (SSEKSRTFEEHPE) the composition is skewed to basic and acidic residues. S1200 carries the post-translational modification Phosphoserine. 2 disordered regions span residues 1208–1235 (SGTP…TTRG) and 1253–1286 (SAEA…QTGS). Polar residues predominate over residues 1221 to 1235 (TQDTGSAVSRDTTRG). 3 positions are modified to phosphoserine: S1339, S1352, and S1389.

This sequence belongs to the AKNA family. Interacts with DCTN1. Interacts with MAPRE1/EB1. Interacts with ODF2. Interacts with CAMSAP3. In terms of processing, phosphorylated; phosphorylation regulates dissociation from and reassembly at the centrosome. In terms of tissue distribution, expressed in neural stem cells isolated at the peak of subventricular zone (SVZ): localizes at the subdistal appendages of the mother centriole in specific subtypes of neural stem cells and in almost all basal progenitors.

Its subcellular location is the cytoplasm. It localises to the cytoskeleton. The protein resides in the microtubule organizing center. The protein localises to the centrosome. It is found in the centriole. Its subcellular location is the nucleus. Its function is as follows. Centrosomal protein that plays a key role in cell delamination by regulating microtubule organization. Required for the delamination and retention of neural stem cells from the subventricular zone during neurogenesis. Also regulates the epithelial-to-mesenchymal transition in other epithelial cells. Acts by increasing centrosomal microtubule nucleation and recruiting nucleation factors and minus-end stabilizers, thereby destabilizing microtubules at the adherens junctions and mediating constriction of the apical endfoot. In addition, may also act as a transcription factor that specifically activates the expression of the CD40 receptor and its ligand CD40L/CD154, two cell surface molecules on lymphocytes that are critical for antigen-dependent-B-cell development. Binds to A/T-rich promoters. It is unclear how it can both act as a microtubule organizer and as a transcription factor; additional evidences are required to reconcile these two apparently contradictory functions. The polypeptide is Microtubule organization protein AKNA (Mus musculus (Mouse)).